The chain runs to 700 residues: Putative proline-rich receptor-like protein kinase PERK6 (700 aa).

The interval 1 to 180 (MAEGQSPENS…SGGGSNSSGN (180 aa)) is disordered. Residues 1 to 186 (MAEGQSPENS…SSGNNEPNTA (186 aa)) lie on the Extracellular side of the membrane. Pro residues-rich tracts occupy residues 9–19 (NSPPSPTPPSP) and 29–47 (SPPP…PPPD). Residues 48 to 137 (DSSNGSPQPP…GNNNDNNNQN (90 aa)) show a composition bias toward low complexity. A glycan (N-linked (GlcNAc...) asparagine) is linked at asparagine 176. Residues 187–207 (AIVGIVAGAGLLFLVMILFCV) traverse the membrane as a helical segment. The Cytoplasmic portion of the chain corresponds to 208–700 (CCCRKKKKKH…NNKTTPSRDH (493 aa)). Positions 249-315 (NLSQQYPGSN…GPSVPPPHPS (67 aa)) are disordered. The span at 255-265 (PGSNGNNNWMN) shows a compositional bias: low complexity. Over residues 266–286 (SPPPPPPGSWQPSPPPPPPPV) the composition is skewed to pro residues. Threonine 326 is subject to Phosphothreonine. Residues 337 to 615 (FSQSRLLGQG…VRALEGDATL (279 aa)) enclose the Protein kinase domain. Residues 343-351 (LGQGGFGYV) and lysine 365 contribute to the ATP site. The residue at position 410 (tyrosine 410) is a Phosphotyrosine. Aspartate 461 acts as the Proton acceptor in catalysis. Residues serine 465 and serine 494 each carry the phosphoserine modification. A phosphothreonine mark is found at threonine 495 and threonine 500. Tyrosine 508 carries the phosphotyrosine modification. Disordered regions lie at residues 616–642 (DDLS…DSST) and 659–700 (EYGA…SRDH). The segment covering 689–700 (ANNNKTTPSRDH) has biased composition (polar residues).

Belongs to the protein kinase superfamily. Ser/Thr protein kinase family. Mostly expressed in flower buds.

It localises to the cell membrane. The catalysed reaction is L-seryl-[protein] + ATP = O-phospho-L-seryl-[protein] + ADP + H(+). The enzyme catalyses L-threonyl-[protein] + ATP = O-phospho-L-threonyl-[protein] + ADP + H(+). In Arabidopsis thaliana (Mouse-ear cress), this protein is Putative proline-rich receptor-like protein kinase PERK6 (PERK6).